A 205-amino-acid chain; its full sequence is Melanocortin-2 receptor accessory protein 2 (205 aa).

Residue asparagine 9 is glycosylated (N-linked (GlcNAc...) asparagine). The chain crosses the membrane as a helical span at residues 45–65 (IVIGFWVGLAVFVIFMFFVLT). At serine 89 the chain carries Phosphoserine.

This sequence belongs to the MRAP family. In terms of assembly, homodimer and heterodimer. Forms antiparallel homodimers and heterodimers with MRAP. Interacts with MC1R, MC2R, MC3R, MC4R and MC5R. In terms of tissue distribution, expressed in the adrenal gland and brain. Not expressed in other tissues.

The protein localises to the cell membrane. It is found in the endoplasmic reticulum membrane. Its function is as follows. Modulator of melanocortin receptor 4 (MC4R), a receptor involved in energy homeostasis. Plays a central role in the control of energy homeostasis and body weight regulation by increasing ligand-sensitivity of MC4R and MC4R-mediated generation of cAMP. May also act as a negative regulator of MC2R: competes with MRAP for binding to MC2R and impairs the binding of corticotropin (ACTH) to MC2R. May also regulate activity of other melanocortin receptors (MC1R, MC3R and MC5R); however, additional evidence is required in vivo. The sequence is that of Melanocortin-2 receptor accessory protein 2 (MRAP2) from Homo sapiens (Human).